The following is a 1076-amino-acid chain: Bifunctional glutamine synthetase adenylyltransferase/adenylyl-removing enzyme (1076 aa).

Residues 1-521 form an adenylyl removase region; sequence MESSMFKPSS…LHLDIYYRPM (521 aa). Residues 524-1076 are adenylyl transferase; sequence VNAQMENDQI…LERNRRRAQR (553 aa). Residues 1041–1056 show a composition bias toward low complexity; that stretch reads ATATASAATPQPQTAP. The tract at residues 1041-1076 is disordered; that stretch reads ATATASAATPQPQTAPRPRMHVIAPRLERNRRRAQR.

It belongs to the GlnE family. Requires Mg(2+) as cofactor.

The enzyme catalyses [glutamine synthetase]-O(4)-(5'-adenylyl)-L-tyrosine + phosphate = [glutamine synthetase]-L-tyrosine + ADP. The catalysed reaction is [glutamine synthetase]-L-tyrosine + ATP = [glutamine synthetase]-O(4)-(5'-adenylyl)-L-tyrosine + diphosphate. Its function is as follows. Involved in the regulation of glutamine synthetase GlnA, a key enzyme in the process to assimilate ammonia. When cellular nitrogen levels are high, the C-terminal adenylyl transferase (AT) inactivates GlnA by covalent transfer of an adenylyl group from ATP to specific tyrosine residue of GlnA, thus reducing its activity. Conversely, when nitrogen levels are low, the N-terminal adenylyl removase (AR) activates GlnA by removing the adenylyl group by phosphorolysis, increasing its activity. The regulatory region of GlnE binds the signal transduction protein PII (GlnB) which indicates the nitrogen status of the cell. This is Bifunctional glutamine synthetase adenylyltransferase/adenylyl-removing enzyme from Bifidobacterium longum subsp. infantis (strain ATCC 15697 / DSM 20088 / JCM 1222 / NCTC 11817 / S12).